A 103-amino-acid chain; its full sequence is Nucleoid-associated protein SUN_2278 (103 aa).

Belongs to the YbaB/EbfC family. In terms of assembly, homodimer.

It localises to the cytoplasm. It is found in the nucleoid. Functionally, binds to DNA and alters its conformation. May be involved in regulation of gene expression, nucleoid organization and DNA protection. This Sulfurovum sp. (strain NBC37-1) protein is Nucleoid-associated protein SUN_2278.